We begin with the raw amino-acid sequence, 220 residues long: Guanylate kinase (220 aa).

Residues 14–194 (GLMVVISSPS…SYAAIKSIIN (181 aa)) enclose the Guanylate kinase-like domain. An ATP-binding site is contributed by 21–28 (SPSGAGKS).

This sequence belongs to the guanylate kinase family.

Its subcellular location is the cytoplasm. The enzyme catalyses GMP + ATP = GDP + ADP. Essential for recycling GMP and indirectly, cGMP. The chain is Guanylate kinase from Brucella abortus (strain 2308).